Consider the following 593-residue polypeptide: DEAD-box ATP-dependent RNA helicase 18 (593 aa).

Positions 16-44 match the Q motif motif; it reads FSDLEPPLSGDIIEALNQSDFEFCTPVQA. The 180-residue stretch at 47–226 folds into the Helicase ATP-binding domain; it reads IPLLCSYKDV…KAGLRNPVRV (180 aa). An ATP-binding site is contributed by 60-67; it reads AATGSGKT. Residues 174 to 177 carry the DEAD box motif; sequence DEAD. The Helicase C-terminal domain maps to 264–411; the sequence is QLVDLLIKNS…ERKCSEDASD (148 aa). The span at 506-524 shows a compositional bias: basic and acidic residues; it reads QRQQNLQVRKEKRQEEKKE. A disordered region spans residues 506 to 561; sequence QRQQNLQVRKEKRQEEKKEKGKRKRVDASASNDPKKASRKLTGKQRQTIQTAEDEE.

It belongs to the DEAD box helicase family. DDX55/SPB4 subfamily.

It carries out the reaction ATP + H2O = ADP + phosphate + H(+). This is DEAD-box ATP-dependent RNA helicase 18 (RH18) from Arabidopsis thaliana (Mouse-ear cress).